Consider the following 841-residue polypeptide: Translation initiation factor IF-2 (841 aa).

The tract at residues 94 to 258 (QRSPEEIEAE…HGFQSPTGPV (165 aa)) is disordered. The segment covering 96-136 (SPEEIEAERKRELEERRAVENAARQKAEEEAKRRAEEEARR) has biased composition (basic and acidic residues). A compositionally biased stretch (low complexity) spans 137–173 (QPAAAQPAGTEAVAAPVAPVEAVREAAPVAAAPAPAA). Basic and acidic residues-rich tracts occupy residues 174-194 (DARK…DNNR), 200-217 (DGER…EKAP), and 225-234 (TTDEESDGFR). Residues 235–248 (RGGRGKAKLKKRNA) are compositionally biased toward basic residues. The 170-residue stretch at 341–510 (SRAPVVTVMG…LLQAEVLELK (170 aa)) folds into the tr-type G domain. Positions 350–357 (GHVDHGKT) are G1. 350–357 (GHVDHGKT) is a GTP binding site. Positions 375–379 (GITQH) are G2. Residues 396 to 399 (DTPG) form a G3 region. GTP-binding positions include 396–400 (DTPGH) and 450–453 (NKID). A G4 region spans residues 450–453 (NKID). The segment at 486-488 (SAK) is G5.

It belongs to the TRAFAC class translation factor GTPase superfamily. Classic translation factor GTPase family. IF-2 subfamily.

The protein resides in the cytoplasm. Functionally, one of the essential components for the initiation of protein synthesis. Protects formylmethionyl-tRNA from spontaneous hydrolysis and promotes its binding to the 30S ribosomal subunits. Also involved in the hydrolysis of GTP during the formation of the 70S ribosomal complex. In Pseudomonas fluorescens (strain SBW25), this protein is Translation initiation factor IF-2.